Consider the following 367-residue polypeptide: MQTLQVDLGERSYPIHIGERLIDRSDLFASKIRGRQVAIVTNETVAPLYLDRLTSTLSGYSVTPIILPDGESHKNWETLQLIFDALLGARHDRNTTVVALGGGVIGDMAGFAAASYQRGVDFIQVPTTLLSQVDSSVGGKTGINHPLGKNMIGAFYQPRAVVIDTATLATLPSRELSAGLAEVIKYGLICDEPFLTWLEANIDRIRSLDSLALTEAIHRSCAAKAKVVNADERESGVRATLNLGHTFGHAIETHMGYGVWLHGEAVSAGTVMALEMSSQLGWIGQADRDRAIRLLQRAGLPVVPPAEMQPQDFLEHMAVDKKVLDGRLRLVLLRQMGEAVVTGDFPRGVLETTLSADYGAMTEHLGA.

Residues 69-74 (DGESHK), 103-107 (GVIGD), 127-128 (TT), lysine 140, lysine 149, and 167-170 (TLAT) each bind NAD(+). The Zn(2+) site is built by glutamate 182, histidine 245, and histidine 262.

The protein belongs to the sugar phosphate cyclases superfamily. Dehydroquinate synthase family. Co(2+) serves as cofactor. Requires Zn(2+) as cofactor. It depends on NAD(+) as a cofactor.

The protein localises to the cytoplasm. It carries out the reaction 7-phospho-2-dehydro-3-deoxy-D-arabino-heptonate = 3-dehydroquinate + phosphate. Its pathway is metabolic intermediate biosynthesis; chorismate biosynthesis; chorismate from D-erythrose 4-phosphate and phosphoenolpyruvate: step 2/7. Catalyzes the conversion of 3-deoxy-D-arabino-heptulosonate 7-phosphate (DAHP) to dehydroquinate (DHQ). This Stutzerimonas stutzeri (strain A1501) (Pseudomonas stutzeri) protein is 3-dehydroquinate synthase.